A 122-amino-acid chain; its full sequence is Ribonuclease P protein component (122 aa).

The protein belongs to the RnpA family. As to quaternary structure, consists of a catalytic RNA component (M1 or rnpB) and a protein subunit.

It carries out the reaction Endonucleolytic cleavage of RNA, removing 5'-extranucleotides from tRNA precursor.. RNaseP catalyzes the removal of the 5'-leader sequence from pre-tRNA to produce the mature 5'-terminus. It can also cleave other RNA substrates such as 4.5S RNA. The protein component plays an auxiliary but essential role in vivo by binding to the 5'-leader sequence and broadening the substrate specificity of the ribozyme. The polypeptide is Ribonuclease P protein component (Lactobacillus johnsonii (strain CNCM I-12250 / La1 / NCC 533)).